The primary structure comprises 91 residues: MTDEPKTRVSVRIYGQDYTIVGTESPAHIRLVAAFVDDKMHEFSERNPVLDVPKLAVLTAVNIANEYLKLKEEYDRLAAKLRREKGGEDDD.

Positions 59–86 (TAVNIANEYLKLKEEYDRLAAKLRREKG) form a coiled coil.

The protein belongs to the ZapA family. Type 2 subfamily. As to quaternary structure, homodimer. Interacts with FtsZ.

The protein resides in the cytoplasm. Its function is as follows. Activator of cell division through the inhibition of FtsZ GTPase activity, therefore promoting FtsZ assembly into bundles of protofilaments necessary for the formation of the division Z ring. It is recruited early at mid-cell but it is not essential for cell division. The protein is Cell division protein ZapA of Geobacillus thermodenitrificans (strain NG80-2).